Consider the following 337-residue polypeptide: Ornithine carbamoyltransferase, catabolic (337 aa).

Carbamoyl phosphate contacts are provided by residues 58 to 61 (STRT), glutamine 85, arginine 109, and 135 to 138 (HPTQ). L-ornithine is bound by residues asparagine 167, aspartate 231, and 235–236 (SM). Residues 272–273 (CL) and arginine 317 each bind carbamoyl phosphate.

The protein belongs to the aspartate/ornithine carbamoyltransferase superfamily. OTCase family.

The protein localises to the cytoplasm. It carries out the reaction carbamoyl phosphate + L-ornithine = L-citrulline + phosphate + H(+). It participates in amino-acid degradation; L-arginine degradation via ADI pathway; carbamoyl phosphate from L-arginine: step 2/2. In terms of biological role, reversibly catalyzes the transfer of the carbamoyl group from carbamoyl phosphate (CP) to the N(epsilon) atom of ornithine (ORN) to produce L-citrulline. This chain is Ornithine carbamoyltransferase, catabolic (arcB), found in Latilactobacillus sakei (Lactobacillus sakei).